The sequence spans 103 residues: Large ribosomal subunit protein uL24 (103 aa).

Residues 70 to 103 (YLDPSTNEPTRLGVRREDGKRVRYAKKSGKDLEN) form a disordered region.

Belongs to the universal ribosomal protein uL24 family. Part of the 50S ribosomal subunit.

Its function is as follows. One of two assembly initiator proteins, it binds directly to the 5'-end of the 23S rRNA, where it nucleates assembly of the 50S subunit. One of the proteins that surrounds the polypeptide exit tunnel on the outside of the subunit. In Lactiplantibacillus plantarum (strain ATCC BAA-793 / NCIMB 8826 / WCFS1) (Lactobacillus plantarum), this protein is Large ribosomal subunit protein uL24.